The primary structure comprises 333 residues: Protoheme IX farnesyltransferase (333 aa).

The next 7 helical transmembrane spans lie at 64 to 84, 110 to 130, 133 to 153, 161 to 181, 189 to 209, 246 to 266, and 287 to 307; these read LICTLGGGALAAAAAGALNCL, TVFLAAVSCTLAASMLLISGV, LAAGLTLLGLCSYVILYTVIL, IVFGGVAGAIPPLVGASAATG, WLFGLVMLWTPAHFWALAILL, IMGVFALPEGGLLYGIMLLPF, and AKSLFRWSILYMFGICLLLLI.

It belongs to the UbiA prenyltransferase family. Protoheme IX farnesyltransferase subfamily.

The protein resides in the cell inner membrane. It catalyses the reaction heme b + (2E,6E)-farnesyl diphosphate + H2O = Fe(II)-heme o + diphosphate. It participates in porphyrin-containing compound metabolism; heme O biosynthesis; heme O from protoheme: step 1/1. Functionally, converts heme B (protoheme IX) to heme O by substitution of the vinyl group on carbon 2 of heme B porphyrin ring with a hydroxyethyl farnesyl side group. This chain is Protoheme IX farnesyltransferase, found in Prochlorococcus marinus (strain MIT 9312).